Consider the following 488-residue polypeptide: Tetratricopeptide repeat protein 23 (488 aa).

TPR repeat units follow at residues 45–78, 137–170, 186–219, 228–261, and 398–431; these read LHLC…TRIC, LELF…SKEM, SRIK…TEIT, VQVL…TPQP, and AETY…ETFL.

As to quaternary structure, associated with the EvC complex composed of EFCAB7, IQCE, EVC2 and EVC.

It localises to the cell projection. The protein resides in the cilium. In terms of biological role, participates positively in the ciliary Hedgehog (Hh) signaling. This chain is Tetratricopeptide repeat protein 23 (Ttc23), found in Mus musculus (Mouse).